We begin with the raw amino-acid sequence, 323 residues long: Extracellular endo-alpha-(1-&gt;5)-L-arabinanase 1 (323 aa).

Residues 1-32 (MKKKKTWKRFLHFSSAALAAGLIFTSAAPAEA) form the signal peptide. D44 acts as the Proton acceptor in catalysis. D44 serves as a coordination point for substrate. D107 contributes to the Ca(2+) binding site. Substrate-binding positions include G125 and 160–163 (NAID). E165 contributes to the Ca(2+) binding site. 180–182 (SFW) is a binding site for substrate. The Proton donor role is filled by E215. D287 lines the Ca(2+) pocket.

The protein belongs to the glycosyl hydrolase 43 family. The cofactor is Ca(2+).

The protein localises to the secreted. The catalysed reaction is Endohydrolysis of (1-&gt;5)-alpha-arabinofuranosidic linkages in (1-&gt;5)-arabinans.. The protein operates within glycan metabolism; L-arabinan degradation. In terms of biological role, involved in the degradation of arabinan and is a key enzyme in the complete degradation of the plant cell wall. Catalyzes the internal cleavage of alpha-(1-&gt;5)-L-arabinofuranosyl residues of linear 1,5-alpha-L-arabinan and of branched sugar beet arabinan. It displays no activity against heavily substituted arabinans or a range of other polysaccharides (larch wood arabinogalactan, wheat arabinoxylan and p-nitrophenyl-alpha-L-arabinofuranoside). The enzyme activity is progressively reduced as alpha-(1-&gt;5)-chains become shorter or more highly substituted. The sequence is that of Extracellular endo-alpha-(1-&gt;5)-L-arabinanase 1 (abnA) from Bacillus subtilis (strain 168).